A 97-amino-acid polypeptide reads, in one-letter code: Large ribosomal subunit protein bL28 (97 aa).

Belongs to the bacterial ribosomal protein bL28 family.

This chain is Large ribosomal subunit protein bL28, found in Nitrobacter winogradskyi (strain ATCC 25391 / DSM 10237 / CIP 104748 / NCIMB 11846 / Nb-255).